Consider the following 200-residue polypeptide: MQLNVNGAQAIEVSERTFGGEFNETLVHQAVVAYLAGGRQGSKQQKNRSDVSGGGKRPWRQKGTGRARAGTSRGPLWRGGGVTFAARPQNHDQKLNKKMYRAALRSILSELVRQERLVVVEDFAVDAPKTKSLVSKLGGLGLSDVLIVSDAVDQNLYLAARNLPHVDVRDVLGSDPVSLIAYDKVLITVPAVKKFEELLG.

Residues 38 to 75 (GRQGSKQQKNRSDVSGGGKRPWRQKGTGRARAGTSRGP) are disordered.

This sequence belongs to the universal ribosomal protein uL4 family. Part of the 50S ribosomal subunit.

Its function is as follows. One of the primary rRNA binding proteins, this protein initially binds near the 5'-end of the 23S rRNA. It is important during the early stages of 50S assembly. It makes multiple contacts with different domains of the 23S rRNA in the assembled 50S subunit and ribosome. Forms part of the polypeptide exit tunnel. The sequence is that of Large ribosomal subunit protein uL4 from Azotobacter vinelandii (strain DJ / ATCC BAA-1303).